A 501-amino-acid polypeptide reads, in one-letter code: Ribose import ATP-binding protein RbsA (501 aa).

ABC transporter domains follow at residues 5 to 241 (LQLK…VGRK) and 252 to 495 (APGE…VGKL). 37 to 44 (GENGAGKS) lines the ATP pocket.

This sequence belongs to the ABC transporter superfamily. Ribose importer (TC 3.A.1.2.1) family. As to quaternary structure, the complex is composed of an ATP-binding protein (RbsA), two transmembrane proteins (RbsC) and a solute-binding protein (RbsB).

The protein localises to the cell inner membrane. The enzyme catalyses D-ribose(out) + ATP + H2O = D-ribose(in) + ADP + phosphate + H(+). In terms of biological role, part of the ABC transporter complex RbsABC involved in ribose import. Responsible for energy coupling to the transport system. The sequence is that of Ribose import ATP-binding protein RbsA from Salmonella typhi.